The following is a 62-amino-acid chain: Short neurotoxin 3 (62 aa).

Cystine bridges form between Cys-3–Cys-24, Cys-17–Cys-41, Cys-43–Cys-54, and Cys-55–Cys-60.

Belongs to the three-finger toxin family. Short-chain subfamily. Type I alpha-neurotoxin sub-subfamily. As to expression, expressed by the venom gland.

It localises to the secreted. Binds to muscle nicotinic acetylcholine receptor (nAChR) and inhibit acetylcholine from binding to the receptor, thereby impairing neuromuscular transmission. The polypeptide is Short neurotoxin 3 (Naja mossambica (Mozambique spitting cobra)).